Here is a 764-residue protein sequence, read N- to C-terminus: Phosphoribosylformylglycinamidine synthase subunit PurL (764 aa).

Residue histidine 57 is part of the active site. Positions 60 and 104 each coordinate ATP. Glutamate 106 provides a ligand contact to Mg(2+). Substrate contacts are provided by residues 107-110 and arginine 129; that span reads SHNH. Histidine 108 (proton acceptor) is an active-site residue. Aspartate 130 contacts Mg(2+). A substrate-binding site is contributed by glutamine 258. Position 286 (aspartate 286) interacts with Mg(2+). 330 to 332 serves as a coordination point for substrate; sequence ESQ. The ATP site is built by asparagine 518 and glycine 555. Position 556 (asparagine 556) interacts with Mg(2+). Serine 558 lines the substrate pocket.

Belongs to the FGAMS family. As to quaternary structure, monomer. Part of the FGAM synthase complex composed of 1 PurL, 1 PurQ and 2 PurS subunits.

Its subcellular location is the cytoplasm. The catalysed reaction is N(2)-formyl-N(1)-(5-phospho-beta-D-ribosyl)glycinamide + L-glutamine + ATP + H2O = 2-formamido-N(1)-(5-O-phospho-beta-D-ribosyl)acetamidine + L-glutamate + ADP + phosphate + H(+). Its pathway is purine metabolism; IMP biosynthesis via de novo pathway; 5-amino-1-(5-phospho-D-ribosyl)imidazole from N(2)-formyl-N(1)-(5-phospho-D-ribosyl)glycinamide: step 1/2. Functionally, part of the phosphoribosylformylglycinamidine synthase complex involved in the purines biosynthetic pathway. Catalyzes the ATP-dependent conversion of formylglycinamide ribonucleotide (FGAR) and glutamine to yield formylglycinamidine ribonucleotide (FGAM) and glutamate. The FGAM synthase complex is composed of three subunits. PurQ produces an ammonia molecule by converting glutamine to glutamate. PurL transfers the ammonia molecule to FGAR to form FGAM in an ATP-dependent manner. PurS interacts with PurQ and PurL and is thought to assist in the transfer of the ammonia molecule from PurQ to PurL. This chain is Phosphoribosylformylglycinamidine synthase subunit PurL, found in Nocardia farcinica (strain IFM 10152).